A 90-amino-acid polypeptide reads, in one-letter code: RNA-binding protein Hfq (90 aa).

A Sm domain is found at 9-68 (DPFLNALRRERVPVSIYLVNGIKLQGQVESFDQFVILLKNTVSQMVYKHAISTVVPARPF). The segment at 71–90 (TGHQNAQGGYGPQDDVPSGE) is disordered.

This sequence belongs to the Hfq family. Homohexamer.

Functionally, RNA chaperone that binds small regulatory RNA (sRNAs) and mRNAs to facilitate mRNA translational regulation in response to envelope stress, environmental stress and changes in metabolite concentrations. Also binds with high specificity to tRNAs. The protein is RNA-binding protein Hfq of Shewanella putrefaciens (strain CN-32 / ATCC BAA-453).